Consider the following 450-residue polypeptide: tRNA-2-methylthio-N(6)-dimethylallyladenosine synthase (450 aa).

Residues 7 to 127 enclose the MTTase N-terminal domain; that stretch reads KRLYIKTYGC…LPELIARAHR (121 aa). Residues Cys16, Cys52, Cys90, Cys165, Cys169, and Cys172 each coordinate [4Fe-4S] cluster. The Radical SAM core domain maps to 151-378; the sequence is QVSGVSAFLT…NQLLDEQQKA (228 aa). The TRAM domain maps to 381-443; sequence ILQVGKTMPV…KMSLGGVLET (63 aa).

The protein belongs to the methylthiotransferase family. MiaB subfamily. Monomer. It depends on [4Fe-4S] cluster as a cofactor.

The protein resides in the cytoplasm. The catalysed reaction is N(6)-dimethylallyladenosine(37) in tRNA + (sulfur carrier)-SH + AH2 + 2 S-adenosyl-L-methionine = 2-methylsulfanyl-N(6)-dimethylallyladenosine(37) in tRNA + (sulfur carrier)-H + 5'-deoxyadenosine + L-methionine + A + S-adenosyl-L-homocysteine + 2 H(+). Functionally, catalyzes the methylthiolation of N6-(dimethylallyl)adenosine (i(6)A), leading to the formation of 2-methylthio-N6-(dimethylallyl)adenosine (ms(2)i(6)A) at position 37 in tRNAs that read codons beginning with uridine. In Caulobacter sp. (strain K31), this protein is tRNA-2-methylthio-N(6)-dimethylallyladenosine synthase.